The sequence spans 859 residues: DNA mismatch repair protein MutS (859 aa).

617-624 (GPNMGGKS) contacts ATP. Residues 799 to 821 (ETTSLPHEQPRAKPGKPAVPQQS) are disordered.

The protein belongs to the DNA mismatch repair MutS family.

This protein is involved in the repair of mismatches in DNA. It is possible that it carries out the mismatch recognition step. This protein has a weak ATPase activity. The polypeptide is DNA mismatch repair protein MutS (Pseudomonas savastanoi pv. phaseolicola (strain 1448A / Race 6) (Pseudomonas syringae pv. phaseolicola (strain 1448A / Race 6))).